We begin with the raw amino-acid sequence, 451 residues long: Glutamyl-tRNA reductase (451 aa).

Substrate contacts are provided by residues 49–52, Ser-109, 114–116, and Gln-120; these read TCNR and EQQ. Catalysis depends on Cys-50, which acts as the Nucleophile. NADP(+) is bound at residue 190–195; it reads GAGAMG.

This sequence belongs to the glutamyl-tRNA reductase family. As to quaternary structure, homodimer.

It catalyses the reaction (S)-4-amino-5-oxopentanoate + tRNA(Glu) + NADP(+) = L-glutamyl-tRNA(Glu) + NADPH + H(+). It functions in the pathway porphyrin-containing compound metabolism; protoporphyrin-IX biosynthesis; 5-aminolevulinate from L-glutamyl-tRNA(Glu): step 1/2. Catalyzes the NADPH-dependent reduction of glutamyl-tRNA(Glu) to glutamate 1-semialdehyde (GSA). This is Glutamyl-tRNA reductase from Mycolicibacterium smegmatis (strain ATCC 700084 / mc(2)155) (Mycobacterium smegmatis).